We begin with the raw amino-acid sequence, 556 residues long: MRSDVITKGTKSAPQRALLNALGLTKEEIERPLVGIVSSKNDIVPGHMNLDKIVEAVKTGVSMAGGTPIVFPAIAVCDGIAMGHQGMKYSLVTRDLIADSTEAMAMAHAFDALVMVPNCDKNVPGLLMAAARLNIPTIFVSGGPMLAGKVDGCKVSFSSISEAVGAFNGGKITEEKLEEFESKVCPTCGSCSGMYTANSMNCLTEVLGMALGGNGTIPAVYSDRIKLAKHAGMKIMELLERNIRPRDVMTEAAFKNALTMDMALGCSTNSMLHLPAIAHEAGIELNVDMANEISAKTPNLCHLAPAGHNYVEELNEAGGIYAVMNEINKLNLLSTDLITCTGKTVAENIKGCINKNKEVIRPVENPYSTTGGIAILKGNLAPDSCVVKRSAVAPEMLKHEGPARVFDCEEDALNAINTGKIVAGDVVIIRYEGPKGGPGMREMLNPTSAIMGRGLGGSVALITDGRFSGATRGAAIGHVSPEAAVGGNIALVEEGDIIKIDIEANSIDFEISEEELERRRSNWKPRQPKITTGYLARYASMVTSGNRGAILEIPKF.

Residue Asp78 participates in Mg(2+) binding. Residue Cys119 coordinates [2Fe-2S] cluster. Mg(2+) contacts are provided by Asp120 and Lys121. An N6-carboxylysine modification is found at Lys121. [2Fe-2S] cluster is bound at residue Cys191. Mg(2+) is bound at residue Glu442. Residue Ser468 is the Proton acceptor of the active site.

This sequence belongs to the IlvD/Edd family. In terms of assembly, homodimer. [2Fe-2S] cluster is required as a cofactor. Mg(2+) serves as cofactor.

It catalyses the reaction (2R)-2,3-dihydroxy-3-methylbutanoate = 3-methyl-2-oxobutanoate + H2O. The catalysed reaction is (2R,3R)-2,3-dihydroxy-3-methylpentanoate = (S)-3-methyl-2-oxopentanoate + H2O. It functions in the pathway amino-acid biosynthesis; L-isoleucine biosynthesis; L-isoleucine from 2-oxobutanoate: step 3/4. The protein operates within amino-acid biosynthesis; L-valine biosynthesis; L-valine from pyruvate: step 3/4. Functionally, functions in the biosynthesis of branched-chain amino acids. Catalyzes the dehydration of (2R,3R)-2,3-dihydroxy-3-methylpentanoate (2,3-dihydroxy-3-methylvalerate) into 2-oxo-3-methylpentanoate (2-oxo-3-methylvalerate) and of (2R)-2,3-dihydroxy-3-methylbutanoate (2,3-dihydroxyisovalerate) into 2-oxo-3-methylbutanoate (2-oxoisovalerate), the penultimate precursor to L-isoleucine and L-valine, respectively. The protein is Dihydroxy-acid dehydratase of Clostridium kluyveri (strain NBRC 12016).